A 179-amino-acid chain; its full sequence is Large ribosomal subunit protein uL5 (179 aa).

This sequence belongs to the universal ribosomal protein uL5 family. As to quaternary structure, part of the 50S ribosomal subunit; part of the 5S rRNA/L5/L18/L25 subcomplex. Contacts the 5S rRNA and the P site tRNA. Forms a bridge to the 30S subunit in the 70S ribosome.

Its function is as follows. This is one of the proteins that bind and probably mediate the attachment of the 5S RNA into the large ribosomal subunit, where it forms part of the central protuberance. In the 70S ribosome it contacts protein S13 of the 30S subunit (bridge B1b), connecting the 2 subunits; this bridge is implicated in subunit movement. Contacts the P site tRNA; the 5S rRNA and some of its associated proteins might help stabilize positioning of ribosome-bound tRNAs. The chain is Large ribosomal subunit protein uL5 from Clostridium perfringens (strain ATCC 13124 / DSM 756 / JCM 1290 / NCIMB 6125 / NCTC 8237 / Type A).